The sequence spans 85 residues: U1-ctenitoxin-Pn1a (85 aa).

An N-terminal signal peptide occupies residues 1-16 (MKVAIVFLSLLVLAFA). A propeptide spanning residues 17–34 (SESIEENREEFPVEESAR) is cleaved from the precursor. Disulfide bonds link cysteine 35–cysteine 49, cysteine 42–cysteine 55, cysteine 46–cysteine 81, cysteine 48–cysteine 65, and cysteine 57–cysteine 63. Positions 82 to 85 (QNKI) are excised as a propeptide.

The protein belongs to the neurotoxin 03 (Tx2) family. 05 subfamily. Expressed by the venom gland.

It localises to the secreted. Functionally, insecticidal neurotoxin that reversibly inhibits the N-methyl-D-aspartate (NMDA)-subtype of ionotropic glutamate receptor (GRIN) and inhibits inactivation of insect sodium channels (Nav). In vivo, is highly toxic to insects. The chain is U1-ctenitoxin-Pn1a from Phoneutria nigriventer (Brazilian armed spider).